We begin with the raw amino-acid sequence, 272 residues long: MTLQEQIMKALHVQPVIDPKVEIRKRIDFLKDYLKTTGAKGFVLGISGGQDSTLAGRLAQLAVAEVRNEGGNATFISVRLPYKVQKDEDDAQLALQFIQADQSVAFDIASTVDAFSNQYENLLDESLTDFNKGNVKARIRMVTQYAIGGQQGLLVIGTDHAAEAVTGFFTKFGDGGADLLPLTGLTKRQGRDLLQELGADERLYLKMPTADLLDEKPGQADETELGITYDQLDDYLEGKSVPADVAEKIEKRYKVSEHKRQVPASMFDDWWK.

Position 45–52 (45–52 (GISGGQDS)) interacts with ATP. Mg(2+) is bound at residue aspartate 51. Residue arginine 138 participates in deamido-NAD(+) binding. Residue threonine 158 coordinates ATP. Glutamate 163 is a binding site for Mg(2+). Residues lysine 171 and aspartate 178 each contribute to the deamido-NAD(+) site. The ATP site is built by lysine 187 and threonine 209. 258–259 (HK) is a deamido-NAD(+) binding site.

The protein belongs to the NAD synthetase family. Homodimer.

The enzyme catalyses deamido-NAD(+) + NH4(+) + ATP = AMP + diphosphate + NAD(+) + H(+). The protein operates within cofactor biosynthesis; NAD(+) biosynthesis; NAD(+) from deamido-NAD(+) (ammonia route): step 1/1. In terms of biological role, catalyzes the ATP-dependent amidation of deamido-NAD to form NAD. Uses ammonia as a nitrogen source. The polypeptide is NH(3)-dependent NAD(+) synthetase (Bacillus mycoides (strain KBAB4) (Bacillus weihenstephanensis)).